Here is a 734-residue protein sequence, read N- to C-terminus: Translation initiation factor IF-2 (734 aa).

The disordered stretch occupies residues 39–110 (SKFAPRSSFT…TGKPETKKRE (72 aa)). Positions 82-110 (DYEKRKLAEQRATRRLKGDTGKPETKKRE) are enriched in basic and acidic residues. Positions 238–405 (NRPPIVTVMG…SIVLQAEILD (168 aa)) constitute a tr-type G domain. The tract at residues 247 to 254 (GHVDHGKT) is G1. Residue 247-254 (GHVDHGKT) participates in GTP binding. Positions 272 to 276 (GITQH) are G2. The tract at residues 293–296 (DTPG) is G3. Residues 293–297 (DTPGH) and 347–350 (NKCD) contribute to the GTP site. The G4 stretch occupies residues 347–350 (NKCD). Residues 383–385 (SAK) are G5.

This sequence belongs to the TRAFAC class translation factor GTPase superfamily. Classic translation factor GTPase family. IF-2 subfamily.

It is found in the cytoplasm. One of the essential components for the initiation of protein synthesis. Protects formylmethionyl-tRNA from spontaneous hydrolysis and promotes its binding to the 30S ribosomal subunits. Also involved in the hydrolysis of GTP during the formation of the 70S ribosomal complex. The protein is Translation initiation factor IF-2 of Pelagibacter ubique (strain HTCC1062).